Consider the following 513-residue polypeptide: ATP synthase subunit alpha (513 aa).

169 to 176 (GDRQTGKT) is an ATP binding site.

Belongs to the ATPase alpha/beta chains family. F-type ATPases have 2 components, CF(1) - the catalytic core - and CF(0) - the membrane proton channel. CF(1) has five subunits: alpha(3), beta(3), gamma(1), delta(1), epsilon(1). CF(0) has three main subunits: a(1), b(2) and c(9-12). The alpha and beta chains form an alternating ring which encloses part of the gamma chain. CF(1) is attached to CF(0) by a central stalk formed by the gamma and epsilon chains, while a peripheral stalk is formed by the delta and b chains.

It localises to the cell inner membrane. It catalyses the reaction ATP + H2O + 4 H(+)(in) = ADP + phosphate + 5 H(+)(out). Produces ATP from ADP in the presence of a proton gradient across the membrane. The alpha chain is a regulatory subunit. The polypeptide is ATP synthase subunit alpha (Cupriavidus necator (strain ATCC 17699 / DSM 428 / KCTC 22496 / NCIMB 10442 / H16 / Stanier 337) (Ralstonia eutropha)).